Consider the following 1025-residue polypeptide: AP-2 complex subunit alpha (1025 aa).

The disordered stretch occupies residues 713–737; the sequence is RSIMVPMPPPSRRNTIDDVNSKISS. Thr727 carries the phosphothreonine modification. Ser733 carries the post-translational modification Phosphoserine.

It belongs to the adaptor complexes large subunit family. In terms of assembly, adaptor protein complex 2 (AP-2) is a heterotetramer composed of two large adaptins (alpha-type subunit APL3 and beta-type subunit APL1), a medium chain (mu-type subunit APM4) and a small adaptin (sigma-type subunit APS2).

Its subcellular location is the cell membrane. It localises to the membrane. It is found in the coated pit. Adaptins are components of the adaptor complexes which link clathrin to receptors in coated vesicles. Clathrin-associated protein complexes are believed to interact with the cytoplasmic tails of membrane proteins, leading to their selection and concentration. Alpha adaptin is a subunit of the plasma membrane adaptor. Facilitates interaction between APL1 and APS2. The chain is AP-2 complex subunit alpha (APL3) from Saccharomyces cerevisiae (strain ATCC 204508 / S288c) (Baker's yeast).